Consider the following 415-residue polypeptide: Protein fuzzy homolog (415 aa).

The protein belongs to the fuzzy family. In terms of assembly, component of the CPLANE (ciliogenesis and planar polarity effectors) complex, composed of INTU, FUZ and WDPCP. Interacts with CPLANE1 and CPLANE2.

The protein resides in the cytoplasm. It localises to the cytoskeleton. The protein localises to the cilium basal body. Its function is as follows. Probable planar cell polarity effector involved in cilium biogenesis. Proposed to function as core component of the CPLANE (ciliogenesis and planar polarity effectors) complex involved in the recruitment of peripheral IFT-A proteins to basal bodies. May regulate protein and membrane transport to the cilium. May regulate the morphogenesis of hair follicles which depends on functional primary cilia. Binds phosphatidylinositol 3-phosphate with highest affinity, followed by phosphatidylinositol 4-phosphate and phosphatidylinositol 5-phosphate. This Rattus norvegicus (Rat) protein is Protein fuzzy homolog (Fuz).